Consider the following 282-residue polypeptide: E3 ubiquitin-protein ligase RNF217 (282 aa).

The tract at residues 1–218 (MSCRVCLEDR…LSIFGCKYRY (218 aa)) is TRIAD supradomain. Residues Cys-3, Cys-6, Cys-23, Cys-26, Cys-123, Cys-126, His-131, Cys-136, Cys-163, and Cys-166 each contribute to the Zn(2+) site. An RING-type 1 zinc finger spans residues 3-49 (CRVCLEDRSIKPLPCCKKPVCDECLKRYLSSQVQLGQAEIQCPITEC). Residues 68–136 (IKYKYFLELS…HAPWHEGVNC (69 aa)) form an IBR-type zinc finger. The RING-type 2; atypical zinc finger occupies 163 to 192 (CPRCKVHIQRTEGCDHMTCSQCNTNFCYRC). Residue Cys-176 is part of the active site. The Zn(2+) site is built by Cys-181, Cys-184, Cys-189, Cys-192, His-205, and Cys-214. A helical transmembrane segment spans residues 243 to 263 (LLIVLGLVLGALAVVIGLFGL).

The protein belongs to the RBR family. RNF217 subfamily.

Its subcellular location is the cytoplasm. The protein localises to the membrane. The catalysed reaction is [E2 ubiquitin-conjugating enzyme]-S-ubiquitinyl-L-cysteine + [acceptor protein]-L-lysine = [E2 ubiquitin-conjugating enzyme]-L-cysteine + [acceptor protein]-N(6)-ubiquitinyl-L-lysine.. It functions in the pathway protein modification; protein ubiquitination. In terms of biological role, E3 ubiquitin-protein ligase which accepts ubiquitin from E2 ubiquitin-conjugating enzymes in the form of a thioester and then directly transfers the ubiquitin to targeted substrates. Mediates the degradation of the iron exporter ferroportin/SLC40A1 and thus regulates iron homeostasis. The chain is E3 ubiquitin-protein ligase RNF217 (rnf217) from Xenopus laevis (African clawed frog).